We begin with the raw amino-acid sequence, 299 residues long: Lipoyl synthase (299 aa).

[4Fe-4S] cluster-binding residues include C34, C39, C45, C60, C64, C67, and S273. The 217-residue stretch at 46–262 folds into the Radical SAM core domain; the sequence is WNKKHATVMI…KYVAYSKGFL (217 aa).

This sequence belongs to the radical SAM superfamily. Lipoyl synthase family. Requires [4Fe-4S] cluster as cofactor.

The protein localises to the cytoplasm. It carries out the reaction [[Fe-S] cluster scaffold protein carrying a second [4Fe-4S](2+) cluster] + N(6)-octanoyl-L-lysyl-[protein] + 2 oxidized [2Fe-2S]-[ferredoxin] + 2 S-adenosyl-L-methionine + 4 H(+) = [[Fe-S] cluster scaffold protein] + N(6)-[(R)-dihydrolipoyl]-L-lysyl-[protein] + 4 Fe(3+) + 2 hydrogen sulfide + 2 5'-deoxyadenosine + 2 L-methionine + 2 reduced [2Fe-2S]-[ferredoxin]. The protein operates within protein modification; protein lipoylation via endogenous pathway; protein N(6)-(lipoyl)lysine from octanoyl-[acyl-carrier-protein]: step 2/2. In terms of biological role, catalyzes the radical-mediated insertion of two sulfur atoms into the C-6 and C-8 positions of the octanoyl moiety bound to the lipoyl domains of lipoate-dependent enzymes, thereby converting the octanoylated domains into lipoylated derivatives. The protein is Lipoyl synthase of Ehrlichia canis (strain Jake).